The sequence spans 229 residues: MTSKSLNAWVIHKQWSGDTSARLKLFTRELGLINCLCKGGRTPKKQSLLQAFIPLWVSIEERYDQYYTRNIESTSSRLDLEGHSLFSGLYINELLYYTLSPDFPDSDLFDAYLFTLNGIALAREREAIEALLRRFEWALLKACGYTFSFLHEARTGELIVPDSHYQFVAGEGFILGGDKKIPGEHLLAIAADNLSESAYLKSAKFIMRQAIDHLLGGREIKARSLYGPA.

It belongs to the RecO family.

Involved in DNA repair and RecF pathway recombination. The protein is DNA repair protein RecO of Legionella pneumophila (strain Paris).